Here is a 125-residue protein sequence, read N- to C-terminus: Small ribosomal subunit protein uS11 (125 aa).

This sequence belongs to the universal ribosomal protein uS11 family. Part of the 30S ribosomal subunit. Interacts with proteins S7 and S18. Binds to IF-3.

Its function is as follows. Located on the platform of the 30S subunit, it bridges several disparate RNA helices of the 16S rRNA. Forms part of the Shine-Dalgarno cleft in the 70S ribosome. The chain is Small ribosomal subunit protein uS11 from Aquifex aeolicus (strain VF5).